A 500-amino-acid chain; its full sequence is Prostacyclin synthase (500 aa).

A helical membrane pass occupies residues 1-20; the sequence is MSWAVVFGLLAALLLLLLLT. Substrate is bound by residues R106, L112, N287, 358–359, and R382; that span reads TR. Residue C441 coordinates heme.

The protein belongs to the cytochrome P450 family. It depends on heme as a cofactor.

It is found in the endoplasmic reticulum membrane. The enzyme catalyses prostaglandin H2 = prostaglandin I2. It carries out the reaction a hydroperoxyeicosatetraenoate = an oxoeicosatetraenoate + H2O. The catalysed reaction is (15S)-hydroperoxy-(5Z,8Z,11Z,13E)-eicosatetraenoate = 15-oxo-(5Z,8Z,11Z,13E)-eicosatetraenoate + H2O. It catalyses the reaction (15S)-hydroperoxy-(5Z,8Z,11Z,13E)-eicosatetraenoate + AH2 = (15S)-hydroxy-(5Z,8Z,11Z,13E)-eicosatetraenoate + A + H2O. In terms of biological role, catalyzes the biosynthesis and metabolism of eicosanoids. Catalyzes the isomerization of prostaglandin H2 to prostacyclin (= prostaglandin I2), a potent mediator of vasodilation and inhibitor of platelet aggregation. Additionally, displays dehydratase activity, toward hydroperoxyeicosatetraenoates (HPETEs), especially toward (15S)-hydroperoxy-(5Z,8Z,11Z,13E)-eicosatetraenoate (15(S)-HPETE). The polypeptide is Prostacyclin synthase (PTGIS) (Bos taurus (Bovine)).